The sequence spans 313 residues: Thymidylate synthase (313 aa).

The interval 1-28 (MPVAGSELPRRPLPPAAQERDAEPRPPH) is disordered. Basic and acidic residues predominate over residues 18–28 (QERDAEPRPPH). Arginine 50 serves as a coordination point for dUMP. Serine 114 carries the phosphoserine modification. DUMP-binding positions include 175–176 (RR), 195–196 (CH), 215–218 (RSGD), asparagine 226, and 256–258 (HIY). The active-site Nucleophile is the cysteine 195. A (6R)-5,10-methylene-5,6,7,8-tetrahydrofolate-binding site is contributed by aspartate 218. Glycyl lysine isopeptide (Lys-Gly) (interchain with G-Cter in SUMO2) cross-links involve residues lysine 287, lysine 292, and lysine 308. Alanine 312 contacts (6R)-5,10-methylene-5,6,7,8-tetrahydrofolate.

The protein belongs to the thymidylate synthase family. In terms of assembly, homodimer.

The protein localises to the nucleus. The protein resides in the cytoplasm. It is found in the mitochondrion. It localises to the mitochondrion matrix. Its subcellular location is the mitochondrion inner membrane. The catalysed reaction is dUMP + (6R)-5,10-methylene-5,6,7,8-tetrahydrofolate = 7,8-dihydrofolate + dTMP. It participates in pyrimidine metabolism; dTTP biosynthesis. Functionally, catalyzes the reductive methylation of 2'-deoxyuridine 5'-monophosphate (dUMP) to thymidine 5'-monophosphate (dTMP), using the cosubstrate, 5,10- methylenetetrahydrofolate (CH2H4folate) as a 1-carbon donor and reductant and contributes to the de novo mitochondrial thymidylate biosynthesis pathway. The polypeptide is Thymidylate synthase (Homo sapiens (Human)).